The chain runs to 338 residues: Tetraacyldisaccharide 4'-kinase (338 aa).

Residue Ile-66–Thr-73 participates in ATP binding.

Belongs to the LpxK family.

The catalysed reaction is a lipid A disaccharide + ATP = a lipid IVA + ADP + H(+). Its pathway is glycolipid biosynthesis; lipid IV(A) biosynthesis; lipid IV(A) from (3R)-3-hydroxytetradecanoyl-[acyl-carrier-protein] and UDP-N-acetyl-alpha-D-glucosamine: step 6/6. In terms of biological role, transfers the gamma-phosphate of ATP to the 4'-position of a tetraacyldisaccharide 1-phosphate intermediate (termed DS-1-P) to form tetraacyldisaccharide 1,4'-bis-phosphate (lipid IVA). This Delftia acidovorans (strain DSM 14801 / SPH-1) protein is Tetraacyldisaccharide 4'-kinase.